The following is a 581-amino-acid chain: MDEESLDGLLFKDHDFSSDLLRQLNSLRQSRILTDVSICAGAREIPCHRNVLASSSPYFRAMFCSSFREKSEAKVQLKGIDPPTLDQIVSYVYTGEAHIATDNVLPVMEAASMLQFPKLFEACSSYLQSQLAPSNCLGMIRLSEILSCETLKKKAREVALTSFPEVAASADLKELCALELRDYLGDDGLCGEEEKVFEALMVWIKHDLQARKRYMQELFKQVRLQYIHPAFFHHFIANDALLQSSPACQIILETAKRQMFSLCGTTVPDCKLLLHVPPRNSYQDFLILLGGRKDSQQTTRDVLLYSKQTGQWQSLAKLPTRLYKASAITLHRSIYVLGGMAVSSGRSLVSHNVYIFSLKLNQWRLGEPMLVARYSHRSTAHKNFIFSIGGIGEGQELMGSMERYDSICNVWESMASMPVGVLHPAVAVKDQRLYLFGGEDIMQNPVRLIQVYHISRNSWFKMETRMIKNVCAPAVVLGERIVIVGGYTRRILAYDPQSNKFVKCADMKDRRMHHGATVMGNKLYVTGGRRLTTDCNIEDSASFDCYDPETDTWTSQGQLPHKLFDHACLTLQCIPRTSGLP.

Positions 34–101 constitute a BTB domain; it reads TDVSICAGAR…VYTGEAHIAT (68 aa). The region spanning 136–237 is the BACK domain; sequence CLGMIRLSEI…HPAFFHHFIA (102 aa). Kelch repeat units follow at residues 285-332, 334-383, 384-431, 433-479, 480-521, and 523-573; these read FLIL…TLHR, IYVL…AHKN, FIFS…VKDQ, LYLF…VLGE, RIVI…VMGN, and LYVT…TLQC.

In Homo sapiens (Human), this protein is Kelch-like protein 38 (KLHL38).